The sequence spans 268 residues: Fibroblast growth factor 5 (268 aa).

Residues 1–20 (MSLSFLLLLFFSHLILSAWA) form the signal peptide. The tract at residues 26–81 (LAPKGQPGPAATDRNPRGSSSRQSSSSAMSSSSASSSPAASLGSQGSGLEQSSFQW) is disordered. Low complexity predominate over residues 43–80 (GSSSRQSSSSAMSSSSASSSPAASLGSQGSGLEQSSFQ). The N-linked (GlcNAc...) asparagine glycan is linked to Asn110. The interval 233 to 255 (VPEKKKPPSPIKPKIPLSAPRKN) is disordered.

This sequence belongs to the heparin-binding growth factors family. In terms of assembly, interacts with FGFR1 and FGFR2. Affinity between fibroblast growth factors (FGFs) and their receptors is increased by heparan sulfate glycosaminoglycans that function as coreceptors. As to expression, expressed in neonatal brain.

The protein resides in the secreted. Plays an important role in the regulation of cell proliferation and cell differentiation. Required for normal regulation of the hair growth cycle. Functions as an inhibitor of hair elongation by promoting progression from anagen, the growth phase of the hair follicle, into catagen the apoptosis-induced regression phase. This Homo sapiens (Human) protein is Fibroblast growth factor 5 (FGF5).